Consider the following 62-residue polypeptide: DNA gyrase inhibitor YacG (62 aa).

Residues cysteine 9, cysteine 12, cysteine 27, and cysteine 31 each coordinate Zn(2+). Residues 43–53 (GYRIPGEKAPE) show a composition bias toward basic and acidic residues. The interval 43–62 (GYRIPGEKAPESGDEEPGDE) is disordered.

Belongs to the DNA gyrase inhibitor YacG family. In terms of assembly, interacts with GyrB. Zn(2+) is required as a cofactor.

Its function is as follows. Inhibits all the catalytic activities of DNA gyrase by preventing its interaction with DNA. Acts by binding directly to the C-terminal domain of GyrB, which probably disrupts DNA binding by the gyrase. This is DNA gyrase inhibitor YacG from Citrifermentans bemidjiense (strain ATCC BAA-1014 / DSM 16622 / JCM 12645 / Bem) (Geobacter bemidjiensis).